A 353-amino-acid polypeptide reads, in one-letter code: Feruloyl esterase B (353 aa).

An N-terminal signal peptide occupies residues 1 to 18; sequence MAIPLVLVLAWLLPVVLA. The tract at residues 19–291 is catalytic; the sequence is ASLTQVNNFG…VSVVLDWFGI (273 aa). The Charge relay system role is filled by S136. N-linked (GlcNAc...) asparagine glycans are attached at residues N179 and N246. The CBM1 domain occupies 317–353; it reads CTAAHWAQCGGIGYSGCTACASPYTCQKANDYYSQCL.

Belongs to the carbohydrate esterase 1 (CE1) family. Feruloyl esterase type B subfamily. In terms of processing, glycosylated.

It is found in the secreted. The catalysed reaction is feruloyl-polysaccharide + H2O = ferulate + polysaccharide.. With respect to regulation, inhibited by the specific serine esterase inhibitor AEBSF. Its function is as follows. Involved in degradation of plant cell walls. Hydrolyzes the feruloyl-arabinose ester bond in arabinoxylans, and the feruloyl-galactose and feruloyl-arabinose ester bonds in pectin. Binds strongly to cellulose. This Talaromyces funiculosus (Fruitlet core rot fungus) protein is Feruloyl esterase B (FAEB).